Consider the following 214-residue polypeptide: Cysteine-rich venom protein LEI1 (214 aa).

Positions 1 to 18 (MIAFILLSLAAVLQQSFG) are cleaved as a signal peptide. An SCP domain is found at 37 to 165 (VNMHNSLRRS…YYSYFYVCQY (129 aa)). Intrachain disulfides connect C74–C152, C91–C166, C147–C163, C185–C192, and C188–C197. In terms of domain architecture, ShKT spans 201–214 (CTVENKFTNCNTLV).

This sequence belongs to the CRISP family. Expressed by the venom gland.

Its subcellular location is the secreted. Blocks contraction of smooth muscle elicited by high potassium-induced depolarization, but does not block caffeine-stimulated contraction. May target voltage-gated calcium channels on smooth muscle. This is Cysteine-rich venom protein LEI1 from Leioheterodon madagascariensis (Malagasy giant hognose snake).